Reading from the N-terminus, the 336-residue chain is MIQKNWQELIKPNKVEFTSSSRTKATLVAEPLERGFGLTLGNALRRVLLSSLRGAAVTAVQIDGVLHEFSSIPGVREDVTDIVLNIKEIAIKMDGDDSKRMVVRKQGPGSVTAGDIQTVGDIEILNPDHVICTLDEGAEIRMEFTVNNGKGYVPAERNRAEDAPIGLIPVDSLYSPVKKVSYKVENTREGQVLDYDKLIMTIETNGSVSGEDAVAFAARILQDQLGVFVNFDEPQKEAEEESVTELAFNPALLKKVDELELSVRSANCLKNDNIVYIGDLIQKTEAEMLRTPNFGRKSLNEIKEVLASMGLHLGMEVPAWPPENIEDLAKRYEDQY.

The tract at residues 1 to 232 (MIQKNWQELI…DQLGVFVNFD (232 aa)) is alpha N-terminal domain (alpha-NTD). Positions 248–336 (FNPALLKKVD…DLAKRYEDQY (89 aa)) are alpha C-terminal domain (alpha-CTD).

It belongs to the RNA polymerase alpha chain family. In terms of assembly, homodimer. The RNAP catalytic core consists of 2 alpha, 1 beta, 1 beta' and 1 omega subunit. When a sigma factor is associated with the core the holoenzyme is formed, which can initiate transcription.

The catalysed reaction is RNA(n) + a ribonucleoside 5'-triphosphate = RNA(n+1) + diphosphate. Its function is as follows. DNA-dependent RNA polymerase catalyzes the transcription of DNA into RNA using the four ribonucleoside triphosphates as substrates. This chain is DNA-directed RNA polymerase subunit alpha, found in Rhizobium radiobacter (Agrobacterium tumefaciens).